Consider the following 305-residue polypeptide: MYNGILPVFKDRGLTSHDVVFKLRKILKTKKVGHTGTLDPEVSGVLPICIGSATKVSDYIMEMGKTYKATVSLGITTTTEDQTGEILEQTAVNEQDVSAKSIDDVLQQFKGELIQIPPMYSSVKVNGKKLYEYARNNQVVERPERKVNIYQINRISDLRFVDDTCQFDMIVECGKGTYIRTLATDIGKALGLPAHMSKLTRTQSGGFDINESLTLEDIKSLHEHDTLLEKLFPIEYGLKGIEQILITDNAIKGKILNGQKFYKAEFKQNIDDIVIMVDNETHKVLAIYEPHPEKLDEIKPKKVFN.

The active-site Nucleophile is Asp-39.

This sequence belongs to the pseudouridine synthase TruB family. Type 1 subfamily.

It catalyses the reaction uridine(55) in tRNA = pseudouridine(55) in tRNA. Functionally, responsible for synthesis of pseudouridine from uracil-55 in the psi GC loop of transfer RNAs. The sequence is that of tRNA pseudouridine synthase B from Staphylococcus saprophyticus subsp. saprophyticus (strain ATCC 15305 / DSM 20229 / NCIMB 8711 / NCTC 7292 / S-41).